Consider the following 267-residue polypeptide: Multivesicular body subunit 12A (267 aa).

Residues 7 to 146 (AAPLSGVGWA…SFAIWCKKGA (140 aa)) form the MABP domain. The SH3-binding motif lies at 154–159 (PVPKPR). The UMA domain occupies 210 to 259 (MDGVPFTLHPKFERSPKSDSSAILTDLTVKSLADIEKEYNYTFVVERTAA).

It belongs to the MVB12 family. In terms of assembly, component of the ESCRT-I complex (endosomal sorting complex required for transport I).

It is found in the cytoplasm. It localises to the endosome. The protein resides in the late endosome membrane. Component of the ESCRT-I complex, a regulator of vesicular trafficking process. Required for the sorting of endocytic ubiquitinated cargos into multivesicular bodies. The protein is Multivesicular body subunit 12A (MVB12A) of Gallus gallus (Chicken).